The following is a 768-amino-acid chain: Histone-lysine N-methyltransferase, H3 lysine-36 specific (768 aa).

Residues 45–90 enclose the AWS domain; sequence AEVMACDCKPGPTACDEDSGCINRLTSIECVRCCKGCQNKRFQGKK. The 118-residue stretch at 92-209 folds into the SET domain; sequence ASVDVISTEK…RGEEVTFDYN (118 aa). In terms of domain architecture, Post-SET spans 216 to 232; that stretch reads EAQACYCGEKNCVGFLG. The span at 411–452 shows a compositional bias: basic and acidic residues; that stretch reads KIDPDGDEHSVSRGTSEEVTKESSKSEEPNDVEVVKVNKKAD. Disordered regions lie at residues 411-508, 533-610, and 680-768; these read KIDP…KGWQ, KASR…VNAQ, and VVKR…IDLE. The span at 453 to 469 shows a compositional bias: polar residues; sequence NNGNGVTDSPSTRSESP. A WW domain is found at 501–534; it reads RSLPKGWQFANDPQGKVYYYNLELNIQQWDFPKA. 3 stretches are compositionally biased toward basic and acidic residues: residues 555–568, 682–734, and 755–768; these read NRRD…ETRE, KRLE…KGEE, and TVKK…IDLE.

It belongs to the class V-like SAM-binding methyltransferase superfamily. Histone-lysine methyltransferase family. SET2 subfamily.

The protein localises to the nucleus. It localises to the chromosome. The enzyme catalyses L-lysyl(36)-[histone H3] + 3 S-adenosyl-L-methionine = N(6),N(6),N(6)-trimethyl-L-lysyl(36)-[histone H3] + 3 S-adenosyl-L-homocysteine + 3 H(+). Histone methyltransferase that trimethylates histone H3 'Lys-36' forming H3K36me3. Involved in transcription elongation as well as in transcription repression. The protein is Histone-lysine N-methyltransferase, H3 lysine-36 specific (set-2) of Yarrowia lipolytica (strain CLIB 122 / E 150) (Yeast).